The chain runs to 178 residues: Oligoribonuclease (178 aa).

One can recognise an Exonuclease domain in the interval 7–168; the sequence is LIWIDLEMTG…DDIRESIAEL (162 aa). Tyr128 is a catalytic residue.

The protein belongs to the oligoribonuclease family.

It localises to the cytoplasm. In terms of biological role, 3'-to-5' exoribonuclease specific for small oligoribonucleotides. The polypeptide is Oligoribonuclease (Francisella tularensis subsp. tularensis (strain FSC 198)).